We begin with the raw amino-acid sequence, 326 residues long: Endochitinase (326 aa).

A signal peptide spans 1–25 (MVYCTASLPLLLLLLVGLLAGEAFA). One can recognise a Chitin-binding type-1 domain in the interval 26 to 66 (EQCGRQAGGALCPGGLCCSQFGWCGSTSDYCGPTCQSQCGG). 7 disulfides stabilise this stretch: Cys28-Cys43, Cys37-Cys49, Cys42-Cys56, Cys60-Cys64, Cys96-Cys158, Cys170-Cys178, and Cys277-Cys309. The active-site Proton donor is Glu140.

It belongs to the glycosyl hydrolase 19 family. Chitinase class I subfamily. In terms of tissue distribution, expressed in the pulp of the fruit (at protein level). Expressed in mesocarp (at protein level).

It catalyses the reaction Random endo-hydrolysis of N-acetyl-beta-D-glucosaminide (1-&gt;4)-beta-linkages in chitin and chitodextrins.. Its function is as follows. Defense against chitin-containing fungal pathogens. Has in vitro antifungal activity against F.oxysporum inhibiting its growth and the branching of its hyphae. Has endochitinase activity, but no exochitinase or lysozyme activities. The sequence is that of Endochitinase from Persea americana (Avocado).